Reading from the N-terminus, the 624-residue chain is MREQFSVLVISLLFSSSYGQVGQMGPPPGQSGQPWTLAEFDAIDTHLKNIQMYARSLQDIVYQERMKQYPFMPNSTAGQPNMGYSTFANDVINRLTKIEFETGELVTQYPLCPSGGTGGNPYPVIPPNAPPPQNVMIQSETIGNSSSVIVSWDRPNVVGTDVRLDDLQYKVYFAPLDEYGQQTAEAIVFSICSVNQTVASITDLYPRSFYKVSVGTVICSTSESSSGAKSLKTPDIIPSEPTNLRVDGTKPNAIALRWDLPLLMGTLANYTIYVTSENGTGFEVAVDPTQVNAILYDLIEGTRYVISVSAFSDNGESPKSSSIEVMTDVFVPDMPRFFQVIFVNTTSVHLVWEPPNPGAGMIRYYSINYTDSLYSQFFNFKTPNAKITTAIITGLQPATTYYFRAFAHTGRRAGAGSAVIMQDTDITVPTVPRELYAQKAKNDPPRARLQWLPPAKTYGSLKNYSIHWGVKNGATRKEEIEPGLLEWYSDFLDDNTEHEFKLYAQNEKGYGPAATVTHRTPKRDTVVPPNVKVDRKKGKNNETVLVVSWNPITQPGKQVSGFRILYRKFEWVYTGRWSLKEIPDPNARSATIGVENSNYSFIVVVRGYRNPRPNMQVNPPWPGR.

A signal peptide spans 1–19; it reads MREQFSVLVISLLFSSSYG. 5 Fibronectin type-III domains span residues 131–236, 240–330, 334–430, 431–524, and 527–624; these read PPQN…TPDI, EPTN…TDVF, MPRF…TVPT, VPRE…PKRD, and VPPN…WPGR.

In terms of tissue distribution, prismatic layer of shell (at protein level).

The protein resides in the secreted. The polypeptide is Fibronectin type III domain-containing protein 2 (Margaritifera margaritifera (Freshwater pearl mussel)).